The sequence spans 78 residues: Large ribosomal subunit protein bL28 (78 aa).

It belongs to the bacterial ribosomal protein bL28 family.

The protein is Large ribosomal subunit protein bL28 of Acidithiobacillus ferrooxidans (strain ATCC 23270 / DSM 14882 / CIP 104768 / NCIMB 8455) (Ferrobacillus ferrooxidans (strain ATCC 23270)).